The sequence spans 187 residues: UPF0301 protein VP2612 (187 aa).

It belongs to the UPF0301 (AlgH) family.

This Vibrio parahaemolyticus serotype O3:K6 (strain RIMD 2210633) protein is UPF0301 protein VP2612.